The chain runs to 294 residues: 4-hydroxy-tetrahydrodipicolinate synthase (294 aa).

Pyruvate is bound at residue Thr-45. The active-site Proton donor/acceptor is the Tyr-133. The active-site Schiff-base intermediate with substrate is Lys-161. Ile-203 serves as a coordination point for pyruvate.

It belongs to the DapA family. Homotetramer; dimer of dimers.

It is found in the cytoplasm. The enzyme catalyses L-aspartate 4-semialdehyde + pyruvate = (2S,4S)-4-hydroxy-2,3,4,5-tetrahydrodipicolinate + H2O + H(+). The protein operates within amino-acid biosynthesis; L-lysine biosynthesis via DAP pathway; (S)-tetrahydrodipicolinate from L-aspartate: step 3/4. Its function is as follows. Catalyzes the condensation of (S)-aspartate-beta-semialdehyde [(S)-ASA] and pyruvate to 4-hydroxy-tetrahydrodipicolinate (HTPA). This Thioalkalivibrio sulfidiphilus (strain HL-EbGR7) protein is 4-hydroxy-tetrahydrodipicolinate synthase.